We begin with the raw amino-acid sequence, 342 residues long: MNPQKIAVLGPGSWGTALSQVLNDNGHEVRIWGNNLEQMAEINEKHTNTRYFKDVVLDEKIKAYSRLDLALENVDAILFVVPTKVTRLVAKQVAQVLKHKVHILHASKGLEQGTHDRISTILEEEIPAQLRGEIVVVSGPSHAEETIVRDITLISAASNDHDEAKYAQSIFSNDYFRLYTNTDVIGVETAGALKNIIAVGAGALHGLGFGDNAKAAIITRGLAEITRLGVAMGAEPLTYSGLSGVGDLIVTGTSIHSRNWRAGDALGRGEKIADIEKNMGMVIEGVSTTKAAYELAQRLEIDMPITETIYKVLYENLDAKSGILDIMRRETRAENEFININK.

3 residues coordinate NADPH: S13, W14, and K108. Sn-glycerol 3-phosphate-binding residues include K108, G139, and S141. A143 is a binding site for NADPH. The sn-glycerol 3-phosphate site is built by K194, D247, S257, R258, and N259. K194 acts as the Proton acceptor in catalysis. R258 contacts NADPH. Residues V282 and E284 each coordinate NADPH.

This sequence belongs to the NAD-dependent glycerol-3-phosphate dehydrogenase family.

The protein resides in the cytoplasm. It catalyses the reaction sn-glycerol 3-phosphate + NAD(+) = dihydroxyacetone phosphate + NADH + H(+). The catalysed reaction is sn-glycerol 3-phosphate + NADP(+) = dihydroxyacetone phosphate + NADPH + H(+). It functions in the pathway membrane lipid metabolism; glycerophospholipid metabolism. Functionally, catalyzes the reduction of the glycolytic intermediate dihydroxyacetone phosphate (DHAP) to sn-glycerol 3-phosphate (G3P), the key precursor for phospholipid synthesis. This Lactococcus lactis subsp. cremoris (strain MG1363) protein is Glycerol-3-phosphate dehydrogenase [NAD(P)+].